The primary structure comprises 238 residues: Transmembrane protein 127 (238 aa).

The residue at position 1 (methionine 1) is an N-acetylmethionine. Positions 1 to 11 (MYAPGGAGLPG) are enriched in gly residues. The segment at 1–27 (MYAPGGAGLPGGRRRRSPGGSALPKQP) is disordered. Serine 17 carries the post-translational modification Phosphoserine. A run of 3 helical transmembrane segments spans residues 96 to 116 (IAAF…LDVF), 130 to 150 (AFAH…SYWA), and 169 to 189 (VYVT…ASIL).

This sequence belongs to the TMEM127 family. As to expression, widely expressed.

The protein localises to the cell membrane. Its subcellular location is the cytoplasm. Functionally, controls cell proliferation acting as a negative regulator of TOR signaling pathway mediated by mTORC1. May act as a tumor suppressor. The polypeptide is Transmembrane protein 127 (TMEM127) (Homo sapiens (Human)).